The following is a 137-amino-acid chain: Nucleoside diphosphate kinase (137 aa).

6 residues coordinate ATP: Lys-9, Phe-57, Arg-85, Thr-91, Arg-102, and Asn-112. His-115 (pros-phosphohistidine intermediate) is an active-site residue.

The protein belongs to the NDK family. Homotetramer. Mg(2+) serves as cofactor.

The protein resides in the cytoplasm. The enzyme catalyses a 2'-deoxyribonucleoside 5'-diphosphate + ATP = a 2'-deoxyribonucleoside 5'-triphosphate + ADP. It catalyses the reaction a ribonucleoside 5'-diphosphate + ATP = a ribonucleoside 5'-triphosphate + ADP. In terms of biological role, major role in the synthesis of nucleoside triphosphates other than ATP. The ATP gamma phosphate is transferred to the NDP beta phosphate via a ping-pong mechanism, using a phosphorylated active-site intermediate. This is Nucleoside diphosphate kinase from Campylobacter curvus (strain 525.92).